The following is a 258-amino-acid chain: uncharacterized protein (258 aa).

This is an uncharacterized protein from Escherichia coli O157:H7.